A 486-amino-acid polypeptide reads, in one-letter code: MTTVYTLVSWLAILGYWLLIAGVTLRILMKRRAVPSAMAWLLIIYILPLVGIIAYLAVGELHLGKRRAERARAMWPSTAKWLNDLKACKHIFAEENSSVAAPLFKLCERRQGIAGVKGNQLQLMTESDDVMQALIRDIQLARHNIEMVFYIWQPGGMADQVAESLMAAARRGIHCRLMLDSAGSVAFFHSPWPELMRNAGIEVVEALKVNLMRVFLRRMDLRQHRKMIMIDNYIAYTGSMNMVDPRYFKQDAGVGQWIDLMARMEGPIATAMGIIYSCDWEIETGKRILPPPPDVNIMPFEQASGHTIHTIASGPGFPEDLIHQALLTAAYSAREYLIMTTPYFVPSDDLLHAICTAAQRGVDVSIILPRKNDSMLVGWASRAFFTELLAAGVKVYQFEGGLLHTKSVLVDGELSLVGTVNLDMRSLWLNFEITLAIDDKGFGADLAAVQDDYISRSRLLDARLWLKRPLWQRVAERLFYFFSPLL.

2 helical membrane-spanning segments follow: residues 3 to 23 (TVYT…IAGV) and 38 to 58 (MAWL…YLAV). PLD phosphodiesterase domains lie at 219–246 (MDLR…VDPR) and 399–426 (EGGL…DMRS). Active-site residues include H224, K226, D231, H404, K406, and D411.

Belongs to the phospholipase D family. Cardiolipin synthase subfamily. ClsA sub-subfamily.

The protein resides in the cell inner membrane. It carries out the reaction 2 a 1,2-diacyl-sn-glycero-3-phospho-(1'-sn-glycerol) = a cardiolipin + glycerol. In terms of biological role, catalyzes the reversible phosphatidyl group transfer from one phosphatidylglycerol molecule to another to form cardiolipin (CL) (diphosphatidylglycerol) and glycerol. This Escherichia coli O157:H7 (strain EC4115 / EHEC) protein is Cardiolipin synthase A.